Here is a 297-residue protein sequence, read N- to C-terminus: E3 ubiquitin-protein ligase RNF212B (297 aa).

The RING-type zinc finger occupies Cys-6 to Gly-40. Positions Leu-87–Gly-136 form a coiled coil. Disordered regions lie at residues Val-152–Ser-179 and Arg-198–Pro-269. Residues Pro-163 to Ser-179 show a composition bias toward low complexity. Polar residues predominate over residues Pro-206 to Gly-234.

As to quaternary structure, homodimer. Autoubiquitinated.

Its subcellular location is the chromosome. It carries out the reaction S-ubiquitinyl-[E2 ubiquitin-conjugating enzyme]-L-cysteine + [acceptor protein]-L-lysine = [E2 ubiquitin-conjugating enzyme]-L-cysteine + N(6)-ubiquitinyl-[acceptor protein]-L-lysine.. It participates in protein modification; protein ubiquitination. In terms of biological role, ubiquitin E3 ligase that acts as a crucial factor for crossing-over (CO) formation during meiosis. Essential for normal prophase I progression and for ensuring appropriate CO designation in meiosis. Recruits key components of the cross-over machinery either directly ou indirectly, leading to the activation of the MutL-gamma complex. The function of RNF212B in CO designation is dependent on its catalytic activity. The polypeptide is E3 ubiquitin-protein ligase RNF212B (Rnf212b) (Mus musculus (Mouse)).